The primary structure comprises 296 residues: 33 kDa chaperonin (296 aa).

Intrachain disulfides connect C233/C235 and C267/C270.

Belongs to the HSP33 family. In terms of processing, under oxidizing conditions two disulfide bonds are formed involving the reactive cysteines. Under reducing conditions zinc is bound to the reactive cysteines and the protein is inactive.

It localises to the cytoplasm. Its function is as follows. Redox regulated molecular chaperone. Protects both thermally unfolding and oxidatively damaged proteins from irreversible aggregation. Plays an important role in the bacterial defense system toward oxidative stress. The protein is 33 kDa chaperonin of Actinobacillus pleuropneumoniae serotype 5b (strain L20).